The following is a 487-amino-acid chain: ESCRT-I complex subunit vps23 (487 aa).

Positions 428–487 (SERELKYYELKRKDEKLDEGIRALNQALHHESIMPASWLKGIKLLARQQFLIRDEMLQYS) constitute an SB domain.

In terms of assembly, component of the ESCRT-I complex (endosomal sorting complex required for transport I).

The protein resides in the cytoplasm. It is found in the endosome. Its subcellular location is the late endosome membrane. Functionally, component of the ESCRT-I complex, a regulator of vesicular trafficking process. Binds to ubiquitinated cargo proteins and is required for the sorting of endocytic ubiquitinated cargos into multivesicular bodies (MVBs). Mediates the association to the ESCRT-0 complex. The chain is ESCRT-I complex subunit vps23 (sst6) from Schizosaccharomyces pombe (strain 972 / ATCC 24843) (Fission yeast).